A 1079-amino-acid chain; its full sequence is MSEKQTGSANGGLGKTLAQLEQVVSASLRPLPSQTGDGTYVTEQVKTGILKDLSHVDLGDLKTLVDVSKSALTGEALDDRKYIMERVIQLSAGLPSTSQIGKELTNTFLTTLWNDLEHPPISYLGRDAMYRRADGSGNNVLWPHIGAAGTPYARSVQPKTVQSPNLPDPETLFDCLLARKEYKEHPNKISSVLFYIASIIIHDLFETDRKDPAISLTSSYLDLSPLYGNNQQEQDLIRTFKDGKLKPDCFSTKRVLGFPPDVGVVLIMFNRFHNYVVEKLAMINEGGRFTKPQESDTAAYAKYDNDLFQTGRLVTCGLYVNIILKDYVRTILNINRTDSIWSLDPRSEMKDGLLGRAAAQATGNQVAAEFNLVYRWHSCISQRDQKWTEDMYQELFPGQDPSKISLQDFLRGLGRWEAKLPGEPRERPFAGLQRKADGSYDDNDLVKIFEESVEDCAGAFGALHVPTVFRSIEALGIQQARSWNLATLNEFRKYFNLAPYKTFEEINSDPYVADQLKRLYDHPDRVEIYPGIIVEDAKESMAPGSGLCTNFTISRAILSDAVALVRGDRFHTVDFTPKHLTNWAYNEIQPQDSVDQTHVFYKLVLRAFPNHFRGDSIYAHFPLVVPSENKKILTKLGTADKYSWDRPNYTPPPQFINSHSACMSILSDQETFKVTWGSKIEFLMRHNNQPYGRDFMLSGDRTPNAMSRQMMGKALYRDKWETEVKRFYENITLKLLHRYSYKLAGVNQVDVVRDIANLAQVHFCASVFSLPLKTESNPRGIFTESELYQIMAVVFTSIFYDADIGKSFELNQAARAVTQQLGQLTLANVELIAKTGFIANLVNSLHRHDVLSEYGVHMIQRLLDSGMPAPEIVWTHVLPTAGGMVANQAQLFSQSLDYYLSEEGSVHLPEINRLAKEDTTEADDLLLRYFMEGARIRSSVALPRVVAQPTVVEDNGQKITLKQGQHIICNLVSASMDPVTFPEPDKVKLDRDMNLYAHFGFGPHQCLGLGLCKTALTTMLKVIGRLDNLRRAPGGQGKLKKLSGPGGIAMYMTPDQTAFFPFPTTMKIQWDGDLPEVKE.

A linoleate 8R-lipoxygenase region spans residues 105–446 (TNTFLTTLWN…DGSYDDNDLV (342 aa)). A heme b-binding site is contributed by His202. Tyr374 is an active-site residue. Position 377 (His377) interacts with heme b. The interval 654–1079 (QFINSHSACM…WDGDLPEVKE (426 aa)) is 9,12-octadecadienoate 8-hydroperoxide 8R-isomerase.

The protein belongs to the peroxidase family. In terms of assembly, homotetramer. Heme b serves as cofactor.

It catalyses the reaction (9Z,12Z)-octadecadienoate + O2 = (8R,9Z,12Z)-8-hydroperoxyoctadeca-9,12-dienoate. The enzyme catalyses (8R,9Z,12Z)-8-hydroperoxyoctadeca-9,12-dienoate = (5S,8R,9Z,12Z)-5,8-dihydroxyoctadeca-9,12-dienoate. Its function is as follows. Bifunctional heme-containing enzyme that oxidizes linoleic acid to (8R,9Z,12Z)-8-hydroperoxyoctadeca-9,12-dienoate (within the N-terminal heme peroxidase domain), which is subsequently isomerized to (5S,8R,9Z,12Z)-5,8-dihydroxyoctadeca-9,12-dienoate (within the C-terminal P450 heme thiolate domain). Oxidized unsaturated fatty acids, so-called oxylipins, derived from endogenous fatty acids, influence the development of the asexual conidiophores and sexual cleistothecia and regulate the secondary metabolism. These substances were collectively named psi factors and are primarily a mixture of hydroxylated oleic, linoleic and alpha-linolenic acids. They are termed psi-beta, psi-alpha, and psi-gamma, respectively. Oxylipins may also serve as activators of mammalian immune responses contributing to enhanced resistance to opportunistic fungi and as factors that modulate fungal development contributing to resistance to host defenses. The chain is Psi-producing oxygenase A (ppoA) from Aspergillus fumigatus (strain ATCC MYA-4609 / CBS 101355 / FGSC A1100 / Af293) (Neosartorya fumigata).